The chain runs to 493 residues: Probable fatty acyl-CoA reductase 4 (493 aa).

The protein belongs to the fatty acyl-CoA reductase family. As to expression, expressed in the endodermal cell layer surrounding the central vasculature in roots. Expressed in the hilum region of seeds. Expressed in stamen filaments and receptacle of siliques.

It catalyses the reaction a long-chain fatty acyl-CoA + 2 NADPH + 2 H(+) = a long-chain primary fatty alcohol + 2 NADP(+) + CoA. Its function is as follows. Catalyzes the reduction of fatty acyl-CoA to fatty alcohols. Catalyzes specifically the formation of C18:0 and C20:0 fatty alcohols. Provides the fatty alcohols required for synthesis of suberin in roots, seed coat and wound-induced leaf tissue. Provides the fatty alcohols required for synthesis of alkyl hydroxycinnamates in root waxes. The chain is Probable fatty acyl-CoA reductase 4 from Arabidopsis thaliana (Mouse-ear cress).